Here is a 988-residue protein sequence, read N- to C-terminus: Squamosa promoter-binding-like protein 16 (988 aa).

The disordered stretch occupies residues 52 to 79; that stretch reads GTPVDLTRPSKKVRSGSPGSGGGGGGNY. Over residues 69–78 the composition is skewed to gly residues; sequence PGSGGGGGGN. Residues 79-156 form an SBP-type zinc finger; it reads YPKCQVDNCK…DGHNRRRRKT (78 aa). 8 residues coordinate Zn(2+): C82, C87, C104, H107, C123, C126, H130, and C142. A Bipartite nuclear localization signal motif is present at residues 139–155; sequence KRSCRRRLDGHNRRRRK. 2 disordered regions span residues 240–262 and 289–416; these read RKNP…SSPS and GFGN…DTST. 3 stretches are compositionally biased toward polar residues: residues 250–262, 301–311, and 327–358; these read NPQN…SSPS, LTSSDHSATTS, and RTSS…FTSS. Residues 368–379 are compositionally biased toward low complexity; sequence ASSTKYYSSASS.

The cofactor is Zn(2+).

Its subcellular location is the nucleus. Its function is as follows. Trans-acting factor that binds specifically to the consensus nucleotide sequence 5'-TNCGTACAA-3'. The protein is Squamosa promoter-binding-like protein 16 (SPL16) of Arabidopsis thaliana (Mouse-ear cress).